The following is a 193-amino-acid chain: Thymidine kinase (193 aa).

Residues 9-16 (SAMNAGKS) and 87-90 (DEAQ) contribute to the ATP site. Glu-88 functions as the Proton acceptor in the catalytic mechanism. Zn(2+)-binding residues include Cys-145, Cys-147, Cys-182, and His-185.

It belongs to the thymidine kinase family. In terms of assembly, homotetramer.

The protein localises to the cytoplasm. It catalyses the reaction thymidine + ATP = dTMP + ADP + H(+). The protein is Thymidine kinase of Idiomarina loihiensis (strain ATCC BAA-735 / DSM 15497 / L2-TR).